Here is a 285-residue protein sequence, read N- to C-terminus: uncharacterized protein (285 aa).

This is an uncharacterized protein from Mycoplasma pneumoniae (strain ATCC 29342 / M129 / Subtype 1) (Mycoplasmoides pneumoniae).